We begin with the raw amino-acid sequence, 94 residues long: Co-chaperonin GroES (94 aa).

Belongs to the GroES chaperonin family. Heptamer of 7 subunits arranged in a ring. Interacts with the chaperonin GroEL.

It localises to the cytoplasm. Functionally, together with the chaperonin GroEL, plays an essential role in assisting protein folding. The GroEL-GroES system forms a nano-cage that allows encapsulation of the non-native substrate proteins and provides a physical environment optimized to promote and accelerate protein folding. GroES binds to the apical surface of the GroEL ring, thereby capping the opening of the GroEL channel. The chain is Co-chaperonin GroES from Listeria innocua serovar 6a (strain ATCC BAA-680 / CLIP 11262).